The following is a 352-amino-acid chain: Protein RecA (352 aa).

Position 67–74 (67–74 (GPESSGKT)) interacts with ATP. Residues 330–352 (STPKPEAESQEKAAAAQDDDSLV) are disordered.

This sequence belongs to the RecA family.

The protein localises to the cytoplasm. In terms of biological role, can catalyze the hydrolysis of ATP in the presence of single-stranded DNA, the ATP-dependent uptake of single-stranded DNA by duplex DNA, and the ATP-dependent hybridization of homologous single-stranded DNAs. It interacts with LexA causing its activation and leading to its autocatalytic cleavage. The sequence is that of Protein RecA from Chromohalobacter salexigens (strain ATCC BAA-138 / DSM 3043 / CIP 106854 / NCIMB 13768 / 1H11).